A 233-amino-acid polypeptide reads, in one-letter code: 5'-methylthioadenosine/S-adenosylhomocysteine nucleosidase (233 aa).

Glu-12 serves as the catalytic Proton acceptor. Substrate contacts are provided by residues Gly-78, Ile-152, and 173 to 174 (ME). Asp-197 functions as the Proton donor in the catalytic mechanism.

The protein belongs to the PNP/UDP phosphorylase family. MtnN subfamily. Homodimer.

It catalyses the reaction S-adenosyl-L-homocysteine + H2O = S-(5-deoxy-D-ribos-5-yl)-L-homocysteine + adenine. The catalysed reaction is S-methyl-5'-thioadenosine + H2O = 5-(methylsulfanyl)-D-ribose + adenine. It carries out the reaction 5'-deoxyadenosine + H2O = 5-deoxy-D-ribose + adenine. The protein operates within amino-acid biosynthesis; L-methionine biosynthesis via salvage pathway; S-methyl-5-thio-alpha-D-ribose 1-phosphate from S-methyl-5'-thioadenosine (hydrolase route): step 1/2. In terms of biological role, catalyzes the irreversible cleavage of the glycosidic bond in both 5'-methylthioadenosine (MTA) and S-adenosylhomocysteine (SAH/AdoHcy) to adenine and the corresponding thioribose, 5'-methylthioribose and S-ribosylhomocysteine, respectively. Also cleaves 5'-deoxyadenosine, a toxic by-product of radical S-adenosylmethionine (SAM) enzymes, into 5-deoxyribose and adenine. Thus, is required for in vivo function of the radical SAM enzymes biotin synthase and lipoic acid synthase, that are inhibited by 5'-deoxyadenosine accumulation. This Sodalis glossinidius (strain morsitans) protein is 5'-methylthioadenosine/S-adenosylhomocysteine nucleosidase.